The following is a 913-amino-acid chain: DNA polymerase I (913 aa).

Positions M1–P305 constitute a 5'-3' exonuclease domain. The 196-residue stretch at I306 to E501 folds into the 3'-5' exonuclease domain. Residues S505–H913 are polymerase.

It belongs to the DNA polymerase type-A family. As to quaternary structure, single-chain monomer with multiple functions.

It carries out the reaction DNA(n) + a 2'-deoxyribonucleoside 5'-triphosphate = DNA(n+1) + diphosphate. Its function is as follows. In addition to polymerase activity, this DNA polymerase exhibits 3'-5' and 5'-3' exonuclease activity. The chain is DNA polymerase I (polA) from Pseudomonas aeruginosa (strain ATCC 15692 / DSM 22644 / CIP 104116 / JCM 14847 / LMG 12228 / 1C / PRS 101 / PAO1).